Here is a 340-residue protein sequence, read N- to C-terminus: Glyceraldehyde-3-phosphate dehydrogenase 2 (340 aa).

NADP(+) is bound by residues 12-13 (RI), Arg78, and Thr120. Residues 151–153 (SCT) and Thr182 contribute to the D-glyceraldehyde 3-phosphate site. Residue Cys152 is the Nucleophile of the active site. Asn183 lines the NADP(+) pocket. D-glyceraldehyde 3-phosphate-binding positions include Arg197, 210 to 211 (TG), and Arg233. Residue Asn315 participates in NADP(+) binding.

It belongs to the glyceraldehyde-3-phosphate dehydrogenase family. In terms of assembly, homotetramer. Interacts with BrxC. In response to oxidative stress, the active site Cys likely reacts with bacillithiol (BSH) to form mixed disulfides to protect the Cys residue against overoxidation. S-bacillithiolation presumably leads to loss of catalytic activity. Debacillithiolation by monothiol bacilliredoxin BrxC restores the activity.

It localises to the cytoplasm. It carries out the reaction D-glyceraldehyde 3-phosphate + phosphate + NADP(+) = (2R)-3-phospho-glyceroyl phosphate + NADPH + H(+). It catalyses the reaction D-glyceraldehyde 3-phosphate + phosphate + NAD(+) = (2R)-3-phospho-glyceroyl phosphate + NADH + H(+). The protein operates within carbohydrate biosynthesis; gluconeogenesis. Functionally, involved in the gluconeogenesis. Catalyzes the oxidative phosphorylation of glyceraldehyde 3-phosphate (G3P) to 1,3-bisphosphoglycerate (BPG) using the cofactor NADP. The first reaction step involves the formation of a hemiacetal intermediate between G3P and a cysteine residue, and this hemiacetal intermediate is then oxidized to a thioester, with concomitant reduction of NADP to NADPH. The reduced NADPH is then exchanged with the second NADP, and the thioester is attacked by a nucleophilic inorganic phosphate to produce BPG. In Bacillus subtilis (strain 168), this protein is Glyceraldehyde-3-phosphate dehydrogenase 2.